Here is a 118-residue protein sequence, read N- to C-terminus: Non-specific lipid-transfer protein 1 (118 aa).

The first 25 residues, 1 to 25 (MAGVMKLACLLLACMIVAGPITSNA), serve as a signal peptide directing secretion. Cystine bridges form between cysteine 29/cysteine 76, cysteine 39/cysteine 53, cysteine 54/cysteine 100, and cysteine 74/cysteine 114.

This sequence belongs to the plant LTP family. As to expression, expressed primarily in epidermal cells.

The protein localises to the secreted. It localises to the cell wall. Its function is as follows. Plant non-specific lipid-transfer proteins transfer phospholipids as well as galactolipids across membranes. May play a role in wax or cutin deposition in the cell walls of expanding epidermal cells and certain secretory tissues. The chain is Non-specific lipid-transfer protein 1 (LTP1) from Arabidopsis thaliana (Mouse-ear cress).